Reading from the N-terminus, the 474-residue chain is AAA-ATPase At3g28610 (474 aa).

Residues 1–25 (MMGNMFGSSLASLFFLWATIQQIFP) form the signal peptide. 244-251 (GPPGTGKS) is a binding site for ATP.

It belongs to the AAA ATPase family. BCS1 subfamily. Requires Mg(2+) as cofactor.

The catalysed reaction is ATP + H2O = ADP + phosphate + H(+). This is AAA-ATPase At3g28610 from Arabidopsis thaliana (Mouse-ear cress).